The following is a 168-amino-acid chain: Photosystem I assembly protein Ycf3 (168 aa).

TPR repeat units lie at residues 35–68 (AFTY…EIDP), 72–105 (SYIL…NPFL), and 120–153 (GEQA…TPGN).

This sequence belongs to the Ycf3 family.

The protein resides in the plastid. It is found in the chloroplast thylakoid membrane. Its function is as follows. Essential for the assembly of the photosystem I (PSI) complex. May act as a chaperone-like factor to guide the assembly of the PSI subunits. The sequence is that of Photosystem I assembly protein Ycf3 from Calycanthus floridus var. glaucus (Eastern sweetshrub).